The following is a 128-amino-acid chain: Gene 39 protein (128 aa).

The protein is Gene 39 protein (39) of Mycobacterium (Mycobacteriophage D29).